Reading from the N-terminus, the 309-residue chain is Probable manganese-dependent inorganic pyrophosphatase (309 aa).

Residues His-9, Asp-13, Asp-15, Asp-75, His-97, and Asp-149 each coordinate Mn(2+).

The protein belongs to the PPase class C family. Requires Mn(2+) as cofactor.

It is found in the cytoplasm. The catalysed reaction is diphosphate + H2O = 2 phosphate + H(+). This Staphylococcus epidermidis (strain ATCC 35984 / DSM 28319 / BCRC 17069 / CCUG 31568 / BM 3577 / RP62A) protein is Probable manganese-dependent inorganic pyrophosphatase.